Consider the following 200-residue polypeptide: Peptidyl-tRNA hydrolase (200 aa).

Position 16 (tyrosine 16) interacts with tRNA. The active-site Proton acceptor is the histidine 21. Residues phenylalanine 67, asparagine 69, and asparagine 115 each contribute to the tRNA site.

This sequence belongs to the PTH family. In terms of assembly, monomer.

It is found in the cytoplasm. It catalyses the reaction an N-acyl-L-alpha-aminoacyl-tRNA + H2O = an N-acyl-L-amino acid + a tRNA + H(+). Functionally, hydrolyzes ribosome-free peptidyl-tRNAs (with 1 or more amino acids incorporated), which drop off the ribosome during protein synthesis, or as a result of ribosome stalling. In terms of biological role, catalyzes the release of premature peptidyl moieties from peptidyl-tRNA molecules trapped in stalled 50S ribosomal subunits, and thus maintains levels of free tRNAs and 50S ribosomes. In Prochlorococcus marinus (strain AS9601), this protein is Peptidyl-tRNA hydrolase.